The chain runs to 165 residues: Transcription elongation factor A protein-like 1 (165 aa).

Residues Met1–His101 are disordered. Over residues Cys33–Leu60 the composition is skewed to acidic residues.

The protein belongs to the TFS-II family. TFA subfamily.

It localises to the nucleus. Its function is as follows. May be involved in transcriptional regulation. Modulates various viral and cellular promoters in a promoter context-dependent manner. Does not bind DNA directly. The sequence is that of Transcription elongation factor A protein-like 1 from Mus musculus (Mouse).